A 1093-amino-acid chain; its full sequence is Leucine-rich repeats and immunoglobulin-like domains protein 1 (1093 aa).

Residues 1–34 (MARPVRGGLGAPRRSPCLLLLWLLLLRLEPVTAA) form the signal peptide. Positions 35–68 (AGPRAPCAAACTCAGDSLDCGGRGLAALPGDLPS) constitute an LRRNT domain. Topologically, residues 35-794 (AGPRAPCAAA…GCRKDGTTVG (760 aa)) are extracellular. Residues C45 and C54 are joined by a disulfide bond. LRR repeat units follow at residues 69-90 (WTRSLNLSYNKLSEIDPAGFED), 93-114 (NLQEVYLNNNELTAVPSLGAAS), 116-137 (HVVSLFLQHNKIRSVEGSQLKA), 140-161 (SLEVLDLSLNNITEVRNTCFPH), 164-185 (PIKELNLAGNRIGTLELGAFDG), 189-210 (SLLTLRLSKNRITQLPVRAFKL), 212-233 (RLTQLDLNRNRIRLIEGLTFQG), 236-257 (SLEVLKLQRNNISKLTDGAFWG), 260-281 (KMHVLHLEYNSLVEVNSGSLYG), 284-305 (ALHQLHLSNNSIARIHRKGWSF), 308-329 (KLHELVLSFNNLTRLDEESLAE), 332-353 (SLSVLRLSHNSISHIAEGAFKG), 356-378 (SLRVLDLDHNEISGTIEDTSGAF), 383-404 (SLSKLTLFGNKIKSVAKRAFSG), and 407-428 (GLEHLNLGGNAIRSVQFDAFVK). Residue N74 is glycosylated (N-linked (GlcNAc...) asparagine). The N-linked (GlcNAc...) asparagine glycan is linked to N150. An N-linked (GlcNAc...) asparagine glycan is attached at N246. 2 N-linked (GlcNAc...) asparagine glycosylation sites follow: N292 and N318. The 52-residue stretch at 440–491 (DSFLCDCQLKWLPPWLIGRMLQAFVTATCAHPESLKGQSIFSVPPESFVCDD) folds into the LRRCT domain. 4 cysteine pairs are disulfide-bonded: C444/C468, C446/C489, C516/C577, and C620/C672. 3 Ig-like C2-type domains span residues 495–594 (PQII…ARLT), 599–688 (PSFT…ATLT), and 693–779 (PSLV…SQLS). A glycan (N-linked (GlcNAc...) asparagine) is linked at N684. The cysteines at positions 714 and 763 are disulfide-linked. A helical membrane pass occupies residues 795 to 815 (IFTIAVVSSIVLTSLVWVCII). At 816 to 1093 (YQTRKKSEEY…RVPLLLAPKS (278 aa)) the chain is on the cytoplasmic side. Disordered regions lie at residues 946-983 (AFHPQPVSRDSAQPSAPNGPEPGGSDQEHSPHHQCSRT) and 1063-1093 (PKACDASPESTPLTGQLPGKQRVPLLLAPKS).

In terms of assembly, interacts (via extracellular LRR and Ig-like domains) with EGFR/ERBB1, ERBB2, ERBB3 and ERBB4 (via extracellular domain). The physiological relevance of the interaction is controversial; LRIG1 may have low affinity for EGFR, and interaction may occur only when high levels of both proteins are present. Widely expressed.

It localises to the cell membrane. Its function is as follows. Acts as a feedback negative regulator of signaling by receptor tyrosine kinases, through a mechanism that involves enhancement of receptor ubiquitination and accelerated intracellular degradation. This chain is Leucine-rich repeats and immunoglobulin-like domains protein 1, found in Homo sapiens (Human).